The sequence spans 2121 residues: PAM2 domain-containing protein UPA2 (2121 aa).

Positions 1-17 (MEGSSLNVAAPVFKPSG) match the PAM2 1 motif. 6 disordered regions span residues 14–46 (KPSGAANSFTPAPSQPAPPTLLSSSGPDAAVHA), 262–302 (QPED…SALT), 375–397 (AATTDHEPRSPLAHQGIPLPPST), 475–507 (ARRRGDSSDLNLRPSLKTTHNHTMSLGLPSSGG), 522–543 (ANSDEGPSKPPSEAQDLPQKPL), and 586–819 (DLGR…QFSR). Positions 339–599 (PWPYSLGLPD…GFGYEPQSPN (261 aa)) are effector domain. A compositionally biased stretch (polar residues) spans 596–607 (QSPNAAPNGTTS). 2 stretches are compositionally biased toward acidic residues: residues 626–637 (EENDELGFDGEE) and 646–658 (EDADASDFEEEPN). Residues 679–689 (DGHDRYADDNQ) are compositionally biased toward basic and acidic residues. The span at 690–712 (SHASNDDSLQDSLTPSDEQFSNP) shows a compositional bias: polar residues. The span at 719–735 (REERILRRQHRAAERAA) shows a compositional bias: basic and acidic residues. Positions 736-745 (RRERKQRQRG) are enriched in basic residues. Polar residues-rich tracts occupy residues 749-758 (SDNTLPSSSI) and 777-788 (NPRNGNTISNPS). 2 short sequence motifs (PAM2) span residues 858-874 (SGISLLNPDAKEFKFGG) and 920-937 (TNAAHLNVGAAPFTPGLF). A compositionally biased stretch (polar residues) spans 950 to 960 (NSLSASPSIAV). Positions 950 to 1012 (NSLSASPSIA…PSPPRPKASA (63 aa)) are disordered. Residues 966 to 981 (GADHRETENRDMQGRE) are compositionally biased toward basic and acidic residues. Residues 1046–1063 (SHESRLTADAPSFVPTWA) carry the PAM2 4 motif. Disordered regions lie at residues 1076-1096 (KRPSLPDWDQQGQQAVDKDLP), 1119-1261 (SKDD…EEES), and 1337-1369 (SHARRASDETQSTIRPLRQRNSSSDVKTANSSL). The span at 1198-1207 (HSPSISQTSD) shows a compositional bias: polar residues. Positions 1248–1261 (GGNDEDDYEDEEES) are enriched in acidic residues. A compositionally biased stretch (polar residues) spans 1345-1369 (ETQSTIRPLRQRNSSSDVKTANSSL). A coiled-coil region spans residues 1783–2054 (LEKQAQANAD…EAKLQTLTAS (272 aa)). The segment at 2099-2121 (SFASTAGSQGKKEVEVDEGGWWS) is disordered. The GWW signature appears at 2118-2120 (GWW).

The protein belongs to the UPA1 PAM2 domain-binding protein family. As to quaternary structure, might form homodimers via its C-terminal coiled-coil domain. Part of large ribonucleoprotein complexes (mRNPs) containing RNA-binding proteins RRM4 and PAB1, endosome-binding protein UPA1, core scaffold protein UPA2 and associated factor GRP1. Interacts (via PAM2 motifs) with PAB1.

It is found in the cytoplasm. It localises to the cytoskeleton. The protein localises to the endosome. In terms of biological role, core component of endosomal mRNA transport and appears to carry out crucial scaffolding functions. The endosomal mRNA transport regulates polarity of the infectious hyphae by transporting a broad spectrum of cargo mRNAs from the nucleus to cell poles. In Mycosarcoma maydis (Corn smut fungus), this protein is PAM2 domain-containing protein UPA2.